A 156-amino-acid polypeptide reads, in one-letter code: Small ribosomal subunit protein uS7 (156 aa).

Belongs to the universal ribosomal protein uS7 family. Part of the 30S ribosomal subunit. Contacts proteins S9 and S11.

In terms of biological role, one of the primary rRNA binding proteins, it binds directly to 16S rRNA where it nucleates assembly of the head domain of the 30S subunit. Is located at the subunit interface close to the decoding center, probably blocks exit of the E-site tRNA. In Listeria innocua serovar 6a (strain ATCC BAA-680 / CLIP 11262), this protein is Small ribosomal subunit protein uS7.